The primary structure comprises 347 residues: Inositol 2-dehydrogenase (347 aa).

It belongs to the Gfo/Idh/MocA family. As to quaternary structure, homotetramer.

The enzyme catalyses myo-inositol + NAD(+) = scyllo-inosose + NADH + H(+). In terms of biological role, involved in the oxidation of myo-inositol (MI) to 2-keto-myo-inositol (2KMI or 2-inosose). The protein is Inositol 2-dehydrogenase of Rubrobacter xylanophilus (strain DSM 9941 / JCM 11954 / NBRC 16129 / PRD-1).